The chain runs to 485 residues: Peroxisomal catalase (485 aa).

Catalysis depends on residues His-53 and Asn-126. Tyr-336 contacts heme.

This sequence belongs to the catalase family. As to quaternary structure, homotetramer. It depends on heme as a cofactor.

The protein resides in the peroxisome matrix. It carries out the reaction 2 H2O2 = O2 + 2 H2O. Its function is as follows. Catalyzes the degradation of hydrogen peroxide (H(2)O(2)) generated by peroxisomal oxidases to water and oxygen, thereby protecting cells from the toxic effects of hydrogen peroxide. In Candida tropicalis (Yeast), this protein is Peroxisomal catalase (POX9).